Consider the following 2690-residue polypeptide: MEKYDIYYNSNEEYYGDVAVIGIGLRFPSGDLNESISKPNQLFNSLLNGLNGIVTTSERWSDNYYLNGEINSVSAGLLPLDEWKRFDPIFFGINPSYDNVVTIDPQQRLLLKCVWEALEDSGIDPISLRGTNTSTFIGSSTTDYGSLQKSPFETQNNIFGSSNHSVANRIGYNFDFRGENFTIDSACSSSLNAINCGYNSIKSNKSNVSVVGGVNFILDPHVSKSFTQLNMLSPTGKCHSFSSDADGFVRSEGVGIVILKKLKDAIKDSNNIYCVIKGSSSNVDGNYDKLNFYSPSKSSQYENMKLAIKSTNGQINESDIDYCEAHGTGTPTGDPIELEGISRLFDQNNNNKKQVLVGSIKSNIGHTEACSGVASLIKCCIMFKNKLFLQNINFKESNPLINFKEWALKVVTEPITFNENKTTVMLINNFGVTGSNVCLILSEFKDKRYSNDESSSDNFCEQIDIDSKANEKKKFLIPLSSNSSTSLDNYKSIIVNNNDDDSNSSTRSFQEFVYNQIKFKSTSLIQKSVIIASDWNEFQDDDNQIKLKNSESLISNITVEKKKSPLTVIVFCGQGSQYNRMALSLYENEPIFRESVNRFDKELFKYYGYSVLDRLRSVSDKDEISIHLPILAQPANIMIQISLYELYKHWGVSADIIVGHSLGELSSSYSSGMIDFETLCHLIYHRSLAQNKTTGTGRALSVNISYDEFIERYQSKNNKYETLEIACYNSPTSIVIAGKEDLLNEISKEFKSNDIFCAMLGSLSSFHTSSQLMIKDEVCSLVFKSKLPSVPVFSTVTTNLFNDQTPYNANYVWENIRQPVSFTQTISNLYKHIESNDMGNEITFIEVAPHPTLQFYLNQMKSTQSSYFNNGKSVTIYSPLHKKKNDYNEFLKTISLLYVNNNFNINFKSQLTNINNNNNNINNNNNNNNNNNNNNNNNNNNNNNNNKIIQFNINSLPLYQWDDNEYFKLNPFHEKITNEGPSIQNLGNGIDSACPTYQTFIDIKKPPFQWLKGHQVSDKFYYPGMGYVQNLLSIYPNQDITISSLEFKSPLVLTEGNNQCLETTVSLLSKNEFNVKSHYKDQKTNQWILSSLGNFSLFKHNSINSEKLINIQALKDKCNFTTISKHDFYESIKIKTNLTYKGLFQGVKECSIGNNCSLAVVSLNEINNHTISNHSTIGRSLFNAATLDSCLHGSLIAVAQPVVLDRIEGFKLYSSNIPLSSSLSKDDNDNSNNSLIKELYIFTEEKARTNYQSFSASVKIILPNGRLLMEISRVVCSSVSLANPSNTIICKPPSNEIYTPYLQPKDSIINKPQQFKHLYSVDEFIAKEEDNQIISTELLLSLFYKHINVRCPTINLESLTTLEYNQFKQLYYNNNGLVNENLFKFVFEILKSYSSSNHYILNHHNNSENKNKNNNNNNNSNNNENSNNESPIHFEKLYNLYTKTTKIIAKQIFPLKDDSFTDTPQSLFENGFLDDFYKNSRVVQPLNNLLSEIIIEALKPILNQPIVFRILEAGGGTGSLSLLILEKICKLLNANPNSVIDIEFTWSDVSSSFSAEIKEKFSPFTAHKNFNIIHRVLDLEKPLFDQDFKTSYYDLVVMSNVMHVVKKLKPTLDEIHNILTPNGQLLFVEPPYKSINYDSVFCCFSQWWPSSDSDTELRPDRSCMNQDKWIKILNETNYRDTIISGNDNLIFLIQTRKPSINEIISKQSSDSSLDQFNSFNNIILFGNNNYGCSLQNSISSNQELKSKTININNFNEFQTWIANNYDNSDDFDNNKTLIIFLKSIEPINISNFKEITYEYIQINQLILKLELTNNFKHLLISLDSTTDNYLSSSIIGAARYFVEYPQLDLYILNYDIISLKILNNNSSSSCNSSNGSISSCSCKQQQLSLINYLINTNNNIQKEFTINNNKVYYERYTRHSNKIKCNLQSKSFETNKDNLLIQLDSNLEYQLYSKRVEPNSKEVEIEIKATGINYKDYLMHIGMVSSDLDLKYGKEYEVENCIGIENPMIGNDFSGIITRLGSDAEKKKFKVGDHVCGVASKTSGSHVVIDYNFIYHQPLNYNHSISASIPSIYVTSLHSIYGVGNLKSNESILIHSAAGGIGISSLDLLKCKKHQGHIFLTVGSKDKEDYLKKNYGSFITAIYSSRNKDYVNEIKNKLIELGEVKQQGVDLILNTLSSEFMDSNFQCLNMSGRIVDLSVTHLTPNDYIANNHFKYNMGYNNVEMIDFNGKMVRSYLKKIIKMINSNKLELSIPIIEYSNNQFKDAIEYINQRKHIGKIIVNHNQDEFNRVYNNYQQNNNNNNQIIMKHSYDISKLNMGKNILLTGQTGIILEIMKYLIRYSNHSIQNIIILSKSKLKWELELLINQTKFIKDNIIKFHFIQIDIEDSNKVNQVLNQLELNENITNIDSIIHFAFNNDIGDVQDVNMNRLNIAHGAKTIGAINLHNESINRSWKIKQFIIASSVSSIFGSDQQCCYVSACSVIDSLSKYRHSLGLPSLAINLGTVASTGFISRNNAIETMFKSSFLKLFSPQLVISSLDLFIQNQRQYPNYSLVDFNFEVMLTSPNYHLYKLDYEINIFKKSYQINTNSSSGSGSDNEFIHSTILNKISELLSIDESKINEDLQLTQYGMDSLVIVQLKNFIDNQLGHNLITIHQLQHNKINQSIDIIKFGYLINKNKFKYKNNNKNNNNG.

Residues 15–443 (YGDVAVIGIG…GSNVCLILSE (429 aa)) form the Ketosynthase family 3 (KS3) domain. Catalysis depends on for beta-ketoacyl synthase activity residues Cys-187, His-326, and His-366. An acyl/malonyl transferases region spans residues 651 to 684 (GVSADIIVGHSLGELSSSYSSGMIDFETLCHLIY). Ser-661 serves as the catalytic For acyl/malonyl transferase activity. A coiled-coil region spans residues 906-934 (NFKSQLTNINNNNNNINNNNNNNNNNNNN). The segment at 916-946 (NNNNNINNNNNNNNNNNNNNNNNNNNNNNNN) is disordered. Residues 973-1102 (HEKITNEGPS…GNFSLFKHNS (130 aa)) are N-terminal hotdog fold. The PKS/mFAS DH domain occupies 973–1285 (HEKITNEGPS…CSSVSLANPS (313 aa)). His-1014 (proton acceptor; for dehydratase activity) is an active-site residue. The C-terminal hotdog fold stretch occupies residues 1119 to 1285 (NFTTISKHDF…CSSVSLANPS (167 aa)). Asp-1188 functions as the Proton donor; for dehydratase activity in the catalytic mechanism. The interval 1401 to 1429 (LNHHNNSENKNKNNNNNNNSNNNENSNNE) is disordered. A compositionally biased stretch (low complexity) spans 1412–1429 (KNNNNNNNSNNNENSNNE). The 78-residue stretch at 2594-2671 (SDNEFIHSTI…QSIDIIKFGY (78 aa)) folds into the Carrier domain. An O-(pantetheine 4'-phosphoryl)serine modification is found at Ser-2631.

It depends on pantetheine 4'-phosphate as a cofactor.

Functionally, probable polyketide synthase. This chain is Probable polyketide synthase 28 (pks28), found in Dictyostelium discoideum (Social amoeba).